The following is a 208-amino-acid chain: N-(5'-phosphoribosyl)anthranilate isomerase (208 aa).

It belongs to the TrpF family.

It catalyses the reaction N-(5-phospho-beta-D-ribosyl)anthranilate = 1-(2-carboxyphenylamino)-1-deoxy-D-ribulose 5-phosphate. It functions in the pathway amino-acid biosynthesis; L-tryptophan biosynthesis; L-tryptophan from chorismate: step 3/5. The protein is N-(5'-phosphoribosyl)anthranilate isomerase of Chlamydia trachomatis serovar A (strain ATCC VR-571B / DSM 19440 / HAR-13).